We begin with the raw amino-acid sequence, 355 residues long: Glucokinase (355 aa).

11-16 (GDIGGT) contacts ATP.

Belongs to the bacterial glucokinase family.

The protein localises to the cytoplasm. The catalysed reaction is D-glucose + ATP = D-glucose 6-phosphate + ADP + H(+). The protein is Glucokinase of Synechocystis sp. (strain ATCC 27184 / PCC 6803 / Kazusa).